The chain runs to 159 residues: Small ribosomal subunit protein uS17x (159 aa).

It belongs to the universal ribosomal protein uS17 family.

The protein localises to the cytoplasm. The sequence is that of Small ribosomal subunit protein uS17x (RPS11C) from Arabidopsis thaliana (Mouse-ear cress).